The sequence spans 72 residues: Large ribosomal subunit protein bL31 (72 aa).

C16, C18, C37, and C40 together coordinate Zn(2+).

Belongs to the bacterial ribosomal protein bL31 family. Type A subfamily. As to quaternary structure, part of the 50S ribosomal subunit. Zn(2+) serves as cofactor.

Functionally, binds the 23S rRNA. The sequence is that of Large ribosomal subunit protein bL31 from Buchnera aphidicola subsp. Acyrthosiphon pisum (strain Tuc7).